The sequence spans 150 residues: MKCPFCGYEETKVLDSRPVSNGTSIRRRRECLQCQARFTTYERYEQTRIRIIKKDGRRELYDRKKLMNGILKACEKRPVSTDQIEEIVDNIEEQLRRSGNSEIYSSEIGDKVMEQLKSIDQVAYVRFASVYKEFRDLDSFLQAIRELKNS.

A zinc finger lies at 3 to 34 (CPFCGYEETKVLDSRPVSNGTSIRRRRECLQC). Positions 49–139 (IRIIKKDGRR…VYKEFRDLDS (91 aa)) constitute an ATP-cone domain.

Belongs to the NrdR family. Zn(2+) is required as a cofactor.

Functionally, negatively regulates transcription of bacterial ribonucleotide reductase nrd genes and operons by binding to NrdR-boxes. The sequence is that of Transcriptional repressor NrdR from Petrotoga mobilis (strain DSM 10674 / SJ95).